The chain runs to 463 residues: Argininosuccinate lyase (463 aa).

The 2-(N(omega)-L-arginino)succinate site is built by Ser-27, Asn-115, and Thr-161. His-162 functions as the Proton acceptor in the catalytic mechanism. Ser-283 functions as the Proton donor in the catalytic mechanism. Residues Asn-291, Tyr-323, Gln-328, and Lys-331 each coordinate 2-(N(omega)-L-arginino)succinate.

Belongs to the lyase 1 family. Argininosuccinate lyase subfamily. In terms of assembly, homotetramer.

It carries out the reaction 2-(N(omega)-L-arginino)succinate = fumarate + L-arginine. Its pathway is amino-acid biosynthesis; L-arginine biosynthesis; L-arginine from L-ornithine and carbamoyl phosphate: step 3/3. This Saccharomyces paradoxus (Yeast) protein is Argininosuccinate lyase (ARG4).